The chain runs to 417 residues: Membrane protein UL43 (417 aa).

The segment at 1 to 21 (MLRNDSHRAVSPEDGQGRVDD) is disordered. Helical transmembrane passes span 57 to 77 (GPYA…LGFM), 90 to 110 (IYAW…SLGE), 119 to 139 (APGP…LLVL), 146 to 166 (LFLL…VGGL), and 175 to 195 (WWIG…GPGA). The interval 217 to 254 (AGESLSRRPPEDPERPGVPGPPSPPTPQRSHGPPADEV) is disordered. Residues 221–231 (LSRRPPEDPER) are compositionally biased toward basic and acidic residues. The segment covering 232–243 (PGVPGPPSPPTP) has biased composition (pro residues). The next 5 membrane-spanning stretches (helical) occupy residues 263–283 (ENVW…VKTV), 291–311 (PGPG…AVAL), 323–343 (LTDP…GLVF), 348–368 (VVVY…VLGL), and 389–409 (GLFF…CPPG).

This sequence belongs to the alphaherpesvirinae HHV-1 UL43 family.

The protein resides in the membrane. The protein is Membrane protein UL43 of Human herpesvirus 1 (strain 17) (HHV-1).